The primary structure comprises 148 residues: Nucleoside diphosphate kinase (148 aa).

Residues Lys-9, Phe-57, Arg-85, Thr-91, Arg-102, and Asn-112 each coordinate ATP. Phosphothreonine is present on Thr-91. The Pros-phosphohistidine intermediate role is filled by His-115. The residue at position 122 (Ser-122) is a Phosphoserine.

It belongs to the NDK family. In terms of assembly, homotetramer. The cofactor is Mg(2+).

It is found in the cytoplasm. The catalysed reaction is a 2'-deoxyribonucleoside 5'-diphosphate + ATP = a 2'-deoxyribonucleoside 5'-triphosphate + ADP. It catalyses the reaction a ribonucleoside 5'-diphosphate + ATP = a ribonucleoside 5'-triphosphate + ADP. Major role in the synthesis of nucleoside triphosphates other than ATP. The ATP gamma phosphate is transferred to the NDP beta phosphate via a ping-pong mechanism, using a phosphorylated active-site intermediate. The protein is Nucleoside diphosphate kinase of Bacillus anthracis.